The following is a 520-amino-acid chain: Dual specificity tyrosine-phosphorylation-regulated kinase 4 (520 aa).

The segment at 1–32 (MPASELKASEIPFHPSIKTQDPKAEEKSPKKQ) is disordered. The Bipartite nuclear localization signal signature appears at 19-37 (TQDPKAEEKSPKKQKVTLT). Basic and acidic residues predominate over residues 20–29 (QDPKAEEKSP). The Protein kinase domain maps to 104–400 (YEVLETIGKG…PDQALKHAWI (297 aa)). ATP-binding positions include 110 to 118 (IGKGSFGQV), Lys133, and 183 to 186 (FELL). The Proton acceptor role is filled by Asp230. At Tyr264 the chain carries Phosphotyrosine; by autocatalysis. The interval 404–467 (RNLKPQPRPQ…KHVQHSGDQQ (64 aa)) is disordered. Residues 439–457 (RKADEITKETTEKTKDSPT) are compositionally biased toward basic and acidic residues.

This sequence belongs to the protein kinase superfamily. CMGC Ser/Thr protein kinase family. MNB/DYRK subfamily. The cofactor is Mg(2+). Post-translationally, autophosphorylation on Tyr-264 in the activation loop is required for kinase activity.

The protein resides in the cytoplasm. It is found in the nucleus. It catalyses the reaction L-seryl-[protein] + ATP = O-phospho-L-seryl-[protein] + ADP + H(+). The catalysed reaction is L-threonyl-[protein] + ATP = O-phospho-L-threonyl-[protein] + ADP + H(+). It carries out the reaction L-tyrosyl-[protein] + ATP = O-phospho-L-tyrosyl-[protein] + ADP + H(+). Its function is as follows. Possible non-essential role in spermiogenesis. The protein is Dual specificity tyrosine-phosphorylation-regulated kinase 4 (DYRK4) of Homo sapiens (Human).